A 270-amino-acid polypeptide reads, in one-letter code: Insulin-like growth factor-binding protein-like 1 (270 aa).

An N-terminal signal peptide occupies residues M1–G17. The 76-residue stretch at R26–A101 folds into the IGFBP N-terminal domain. 7 cysteine pairs are disulfide-bonded: C30-C55, C33-C57, C38-C58, C44-C61, C69-C83, C77-C98, and C107-C143. The 59-residue stretch at A87–F145 folds into the Kazal-like domain. The Ig-like C2-type domain maps to P147–T251. N-linked (GlcNAc...) asparagine glycosylation is present at N158. C168 and C235 form a disulfide bridge.

It localises to the secreted. Its function is as follows. IGF-binding proteins prolong the half-life of IGFs and have been shown to either inhibit or stimulate the growth promoting effects of the IGFs in cell culture. They alter the interaction of IGFs with their cell surface receptors. The polypeptide is Insulin-like growth factor-binding protein-like 1 (Igfbpl1) (Mus musculus (Mouse)).